Here is a 198-residue protein sequence, read N- to C-terminus: Transcription factor FapR (198 aa).

The MaoC-like domain occupies 102-168 (TRIARGHHLF…GRTVVDVNSY (67 aa)).

This sequence belongs to the FapR family.

Functionally, transcriptional factor involved in regulation of membrane lipid biosynthesis by repressing genes involved in fatty acid and phospholipid metabolism. In Geobacillus thermodenitrificans (strain NG80-2), this protein is Transcription factor FapR.